Consider the following 267-residue polypeptide: Indole-3-glycerol phosphate synthase (267 aa).

The protein belongs to the TrpC family.

The enzyme catalyses 1-(2-carboxyphenylamino)-1-deoxy-D-ribulose 5-phosphate + H(+) = (1S,2R)-1-C-(indol-3-yl)glycerol 3-phosphate + CO2 + H2O. The protein operates within amino-acid biosynthesis; L-tryptophan biosynthesis; L-tryptophan from chorismate: step 4/5. In Ralstonia pickettii (strain 12J), this protein is Indole-3-glycerol phosphate synthase.